Reading from the N-terminus, the 265-residue chain is 5'-nucleotidase SurE (265 aa).

The a divalent metal cation site is built by Asp8, Asp9, Ser39, and Asn96.

It belongs to the SurE nucleotidase family. It depends on a divalent metal cation as a cofactor.

It is found in the cytoplasm. The catalysed reaction is a ribonucleoside 5'-phosphate + H2O = a ribonucleoside + phosphate. Its function is as follows. Nucleotidase that shows phosphatase activity on nucleoside 5'-monophosphates. The sequence is that of 5'-nucleotidase SurE from Dehalococcoides mccartyi (strain ATCC BAA-2266 / KCTC 15142 / 195) (Dehalococcoides ethenogenes (strain 195)).